The primary structure comprises 674 residues: Pre-mRNA-splicing factor cwf4 (674 aa).

16 HAT repeats span residues 50–82 (EFQG…WELD), 84–116 (KEFA…CEMK), 118–150 (RNIN…MEEM), 152–183 (GNIT…MERR), 185–216 (HENE…FEEE), 218–253 (GNAA…FEIR), 255–289 (KEYE…FEKQ), 299–331 (TVLD…LEES), 333–367 (GDIN…IWLN), 377–413 (KDVD…FELR), 415–446 (RKID…FEDA), 448–480 (KQFD…LETK), 482–516 (GDSD…FEFE), 518–549 (MEYG…FEIA), 567–608 (TAVV…MHGT), and 610–643 (DTRK…YLFP).

The protein belongs to the crooked-neck family. Belongs to the 40S cdc5-associated complex (or cwf complex), a spliceosome sub-complex reminiscent of a late-stage spliceosome composed of the U2, U5 and U6 snRNAs and at least brr2, cdc5, cwf2/prp3, cwf3/syf1, cwf4/syf3, cwf5/ecm2, spp42/cwf6, cwf7/spf27, cwf8, cwf9, cwf10, cwf11, cwf12, prp45/cwf13, cwf14, cwf15, cwf16, cwf17, cwf18, cwf19, cwf20, cwf21, cwf22, cwf23, cwf24, cwf25, cwf26, cyp7/cwf27, cwf28, cwf29/ist3, lea1, msl1, prp5/cwf1, prp10, prp12/sap130, prp17, prp22, sap61, sap62, sap114, sap145, slu7, smb1, smd1, smd3, smf1, smg1 and syf2.

The protein localises to the nucleus. Involved in pre-mRNA splicing and cell cycle progression. Required for the spliceosome assembly and initiation of the DNA replication. In Schizosaccharomyces pombe (strain 972 / ATCC 24843) (Fission yeast), this protein is Pre-mRNA-splicing factor cwf4 (cwf4).